A 174-amino-acid chain; its full sequence is Crossover junction endodeoxyribonuclease RuvC (174 aa).

Active-site residues include Asp-8, Glu-67, and Asp-139. Mg(2+) contacts are provided by Asp-8, Glu-67, and Asp-139.

This sequence belongs to the RuvC family. In terms of assembly, homodimer which binds Holliday junction (HJ) DNA. The HJ becomes 2-fold symmetrical on binding to RuvC with unstacked arms; it has a different conformation from HJ DNA in complex with RuvA. In the full resolvosome a probable DNA-RuvA(4)-RuvB(12)-RuvC(2) complex forms which resolves the HJ. Mg(2+) is required as a cofactor.

Its subcellular location is the cytoplasm. The catalysed reaction is Endonucleolytic cleavage at a junction such as a reciprocal single-stranded crossover between two homologous DNA duplexes (Holliday junction).. In terms of biological role, the RuvA-RuvB-RuvC complex processes Holliday junction (HJ) DNA during genetic recombination and DNA repair. Endonuclease that resolves HJ intermediates. Cleaves cruciform DNA by making single-stranded nicks across the HJ at symmetrical positions within the homologous arms, yielding a 5'-phosphate and a 3'-hydroxyl group; requires a central core of homology in the junction. The consensus cleavage sequence is 5'-(A/T)TT(C/G)-3'. Cleavage occurs on the 3'-side of the TT dinucleotide at the point of strand exchange. HJ branch migration catalyzed by RuvA-RuvB allows RuvC to scan DNA until it finds its consensus sequence, where it cleaves and resolves the cruciform DNA. The chain is Crossover junction endodeoxyribonuclease RuvC from Pseudomonas savastanoi pv. phaseolicola (strain 1448A / Race 6) (Pseudomonas syringae pv. phaseolicola (strain 1448A / Race 6)).